The following is a 1319-amino-acid chain: DNA-directed RNA polymerase subunit beta' (1319 aa).

Residues C60, C62, C75, and C78 each coordinate Zn(2+). Residues D535, D537, and D539 each contribute to the Mg(2+) site. Positions 890, 971, 978, and 981 each coordinate Zn(2+).

The protein belongs to the RNA polymerase beta' chain family. As to quaternary structure, the RNAP catalytic core consists of 2 alpha, 1 beta, 1 beta' and 1 omega subunit. When a sigma factor is associated with the core the holoenzyme is formed, which can initiate transcription. Requires Mg(2+) as cofactor. It depends on Zn(2+) as a cofactor.

It carries out the reaction RNA(n) + a ribonucleoside 5'-triphosphate = RNA(n+1) + diphosphate. DNA-dependent RNA polymerase catalyzes the transcription of DNA into RNA using the four ribonucleoside triphosphates as substrates. The chain is DNA-directed RNA polymerase subunit beta' from Mycobacteroides abscessus (strain ATCC 19977 / DSM 44196 / CCUG 20993 / CIP 104536 / JCM 13569 / NCTC 13031 / TMC 1543 / L948) (Mycobacterium abscessus).